The chain runs to 460 residues: MATRGRPGAKQVADHSVSDGGEQRRIPQKPPGPERCDVCSAVSAAGAAADLIDVAPLEEDLTKEPQQIVVTIMSNDPAKVCLKVDPALHYRNVELEPYRFLGRGGYGSVFYSRRANVAVKALTHGASFRWELAVSLIVSSAARRQELSDIAKHFLQIYAFSSVEKIIVMEYIRHDLRTYLDEHCKPVTQSALDALVREFRGLAKALAFFHIECGLAHLDVKQNNILVNCDPRTGDPVRMVLADFSLAAINGNSFLNKCCMVCPGRPGVTGVHIIDTEDAVNSLPSNNILLFRMSRRPPEFLLDYCNGVGPRCGEVMGAMTTFAMDVFALGSVVHEVLLLCLSRVLGRDPFPHMTCTDEPMDHKTILSLLAYRLALTDYLSQSWSSAGFVNPAGTREGISSALQWECMRDMFLASAEAWTRTVRRKMNGARSPSMFADILDLSILLCHFDPDVRRTVSALA.

Residues 1–37 are disordered; it reads MATRGRPGAKQVADHSVSDGGEQRRIPQKPPGPERCD. Over residues 12 to 25 the composition is skewed to basic and acidic residues; the sequence is VADHSVSDGGEQRR. Residues 95-460 form the Protein kinase domain; that stretch reads LEPYRFLGRG…DVRRTVSALA (366 aa). ATP contacts are provided by residues 101 to 109 and Lys-120; that span reads LGRGGYGSV. Asp-219 serves as the catalytic Proton acceptor.

This sequence belongs to the protein kinase superfamily. Ser/Thr protein kinase family. Post-translationally, autophosphorylated.

The protein localises to the virion tegument. It is found in the host nucleus. The catalysed reaction is L-seryl-[protein] + ATP = O-phospho-L-seryl-[protein] + ADP + H(+). It catalyses the reaction L-threonyl-[protein] + ATP = O-phospho-L-threonyl-[protein] + ADP + H(+). Multifunctional serine/threonine kinase that plays a role in several processes including egress of virus particles from the nucleus, modulation of the actin cytoskeleton and regulation of viral and cellular gene expression. Regulates the nuclear localization of viral envelopment factors UL34 and UL31 homologs, by phosphorylating the US3 kinase homolog, indicating a role in nuclear egress. Disrupts host nuclear lamins, including LMNA and LMNB1. Phosphorylates the viral Fc receptor composed of glycoproteins E (gE) and I (gI). Phosphorylation of glycoprotein E (gE) by UL13 homolog alters its subcellular localization, from the host early endosome to the plasma membrane. Participates in the transcriptional regulation of cellular and viral mRNAs mainly by phosphorylating the viral transcriptional regulator ICP22 homolog. This chain is Serine/threonine-protein kinase UL13 (UL13), found in Amazona oratrix (yellow-headed parrot).